We begin with the raw amino-acid sequence, 331 residues long: GTPase Obg (331 aa).

Residues 1-159 (MHFIDEVKIY…MWIHLRLKLL (159 aa)) enclose the Obg domain. Residues 160–327 (SDVGLIGLPN…IVKLALEIIK (168 aa)) form the OBG-type G domain. Residues 166–173 (GLPNAGKS), 191–195 (FTTLV), 212–215 (DIPG), 279–282 (NKCD), and 308–310 (STY) contribute to the GTP site. The Mg(2+) site is built by Ser173 and Thr193.

It belongs to the TRAFAC class OBG-HflX-like GTPase superfamily. OBG GTPase family. In terms of assembly, monomer. The cofactor is Mg(2+).

It is found in the cytoplasm. An essential GTPase which binds GTP, GDP and possibly (p)ppGpp with moderate affinity, with high nucleotide exchange rates and a fairly low GTP hydrolysis rate. Plays a role in control of the cell cycle, stress response, ribosome biogenesis and in those bacteria that undergo differentiation, in morphogenesis control. The chain is GTPase Obg from Rickettsia prowazekii (strain Madrid E).